The following is a 518-amino-acid chain: Crotonobetaine/carnitine--CoA ligase (518 aa).

This sequence belongs to the ATP-dependent AMP-binding enzyme family.

The catalysed reaction is 4-(trimethylamino)butanoate + ATP + CoA = 4-(trimethylamino)butanoyl-CoA + AMP + diphosphate. It carries out the reaction crotonobetaine + ATP + CoA = crotonobetainyl-CoA + AMP + diphosphate. The enzyme catalyses (R)-carnitine + ATP + CoA = (R)-carnitinyl-CoA + AMP + diphosphate. It functions in the pathway amine and polyamine metabolism; carnitine metabolism. Functionally, catalyzes the transfer of CoA to carnitine, generating the initial carnitinyl-CoA needed for the CaiB reaction cycle. Also has activity toward crotonobetaine and gamma-butyrobetaine. This is Crotonobetaine/carnitine--CoA ligase from Proteus sp. (strain LE138).